The chain runs to 254 residues: Peroxisomal membrane protein 11-2 (254 aa).

Residues 1-113 (MVTAAGSPSS…YHPHPHVHPL (113 aa)) are Cytoplasmic-facing. The helical transmembrane segment at 114–134 (LVLLAYGGQGVYNFLEQFAWL) threads the bilayer. Residues 135–227 (AKAGLLPARL…TVGDVTGRKG (93 aa)) are Lumenal-facing. A helical membrane pass occupies residues 228 to 247 (LLGSSTLMASAGLLSALISV). Residues 248–254 (HKNWNSC) are Cytoplasmic-facing.

Belongs to the peroxin-11 family.

The protein localises to the peroxisome membrane. Involved in peroxisomal proliferation. The polypeptide is Peroxisomal membrane protein 11-2 (PEX11-2) (Oryza sativa subsp. japonica (Rice)).